The primary structure comprises 329 residues: Malate dehydrogenase (329 aa).

12 to 18 lines the NAD(+) pocket; the sequence is GAAGQIG. 2 residues coordinate substrate: Arg93 and Arg99. NAD(+)-binding positions include Asn106, Gln113, and 130–132; that span reads TGN. 2 residues coordinate substrate: Asn132 and Arg163. His188 (proton acceptor) is an active-site residue.

It belongs to the LDH/MDH superfamily. MDH type 2 family.

It catalyses the reaction (S)-malate + NAD(+) = oxaloacetate + NADH + H(+). Its function is as follows. Catalyzes the reversible oxidation of malate to oxaloacetate. This is Malate dehydrogenase from Mycolicibacterium paratuberculosis (strain ATCC BAA-968 / K-10) (Mycobacterium paratuberculosis).